A 608-amino-acid polypeptide reads, in one-letter code: MGGLIDLNVMETEEDETQTQTPSSASGSVSPTSSSSASVSVVSSNSAGGGVCLELWHACAGPLISLPKRGSLVLYFPQGHLEQAPDFSAAIYGLPPHVFCRILDVKLHAETTTDEVYAQVSLLPESEDIERKVREGIIDVDGGEEDYEVLKRSNTPHMFCKTLTASDTSTHGGFSVPRRAAEDCFPPLDYSQPRPSQELLARDLHGLEWRFRHIYRGQPRRHLLTTGWSAFVNKKKLVSGDAVLFLRGDDGKLRLGVRRASQIEGTAALSAQYNQNMNHNNFSEVAHAISTHSVFSISYNPKASWSNFIIPAPKFLKVVDYPFCIGMRFKARVESEDASERRSPGIISGISDLDPIRWPGSKWRCLLVRWDDIVANGHQQRVSPWEIEPSGSISNSGSFVTTGPKRSRIGFSSGKPDIPVSEGIRATDFEESLRFQRVLQGQEIFPGFINTCSDGGAGARRGRFKGTEFGDSYGFHKVLQGQETVPAYSITDHRQQHGLSQRNIWCGPFQNFSTRILPPSVSSSPSSVLLTNSNSPNGRLEDHHGGSGRCRLFGFPLTDETTAVASATAVPCVEGNSMKGASAVQSNHHHSQGRDIYAMRDMLLDIAL.

The disordered stretch occupies residues 1-40 (MGGLIDLNVMETEEDETQTQTPSSASGSVSPTSSSSASVS). The span at 18 to 40 (QTQTPSSASGSVSPTSSSSASVS) shows a compositional bias: low complexity. Residues 159-261 (FCKTLTASDT…KLRLGVRRAS (103 aa)) constitute a DNA-binding region (TF-B3).

This sequence belongs to the ARF family. As to quaternary structure, homo and heterodimers. Expressed in the whole plant.

Its subcellular location is the nucleus. Functionally, auxin response factors (ARFs) are transcriptional factors that bind specifically to the DNA sequence 5'-TGTCTC-3' found in the auxin-responsive promoter elements (AuxREs). Could act as transcriptional activator or repressor. Formation of heterodimers with Aux/IAA proteins may alter their ability to modulate early auxin response genes expression. Involved in the establishment or elaboration of tissue patterning during gynoecial development. The sequence is that of Auxin response factor 3 (ARF3) from Arabidopsis thaliana (Mouse-ear cress).